Here is a 300-residue protein sequence, read N- to C-terminus: Glycerol-3-phosphate dehydrogenase [NAD(P)+] (300 aa).

Residues Trp11, Lys33, and Lys79 each coordinate NADPH. Sn-glycerol 3-phosphate contacts are provided by Lys79, Gly107, and Ser109. Ala111 contacts NADPH. 5 residues coordinate sn-glycerol 3-phosphate: Lys161, Asp214, Ser224, Arg225, and Asn226. Lys161 (proton acceptor) is an active-site residue. Arg225 contacts NADPH. 2 residues coordinate NADPH: Val249 and Glu251.

The protein belongs to the NAD-dependent glycerol-3-phosphate dehydrogenase family.

The protein resides in the cytoplasm. It carries out the reaction sn-glycerol 3-phosphate + NAD(+) = dihydroxyacetone phosphate + NADH + H(+). The catalysed reaction is sn-glycerol 3-phosphate + NADP(+) = dihydroxyacetone phosphate + NADPH + H(+). It functions in the pathway membrane lipid metabolism; glycerophospholipid metabolism. In terms of biological role, catalyzes the reduction of the glycolytic intermediate dihydroxyacetone phosphate (DHAP) to sn-glycerol 3-phosphate (G3P), the key precursor for phospholipid synthesis. The sequence is that of Glycerol-3-phosphate dehydrogenase [NAD(P)+] from Campylobacter lari (strain RM2100 / D67 / ATCC BAA-1060).